Here is a 1072-residue protein sequence, read N- to C-terminus: Carbamoyl phosphate synthase large chain (1072 aa).

The interval 1-401 (MPKRLDINTI…SLLKAVRSLE (401 aa)) is carboxyphosphate synthetic domain. Positions 129, 169, 175, 176, 208, 210, 215, 241, 242, 243, 284, and 298 each coordinate ATP. The 195-residue stretch at 133 to 327 (RTLMQDLNEP…IAKLAAKIAV (195 aa)) folds into the ATP-grasp 1 domain. Residues glutamine 284, glutamate 298, and asparagine 300 each coordinate Mg(2+). 3 residues coordinate Mn(2+): glutamine 284, glutamate 298, and asparagine 300. The segment at 402-546 (LGIYHLELDH…YSTYAEENES (145 aa)) is oligomerization domain. Positions 547–929 (IVTDRKSVVV…ALYKGLVASG (383 aa)) are carbamoyl phosphate synthetic domain. In terms of domain architecture, ATP-grasp 2 spans 671-861 (EAALTKLGIP…MANVATKVIL (191 aa)). Residues arginine 707, arginine 746, glutamate 752, glycine 777, valine 778, histidine 779, serine 780, glutamine 820, and glutamate 832 each contribute to the ATP site. 3 residues coordinate Mg(2+): glutamine 820, glutamate 832, and asparagine 834. The Mn(2+) site is built by glutamine 820, glutamate 832, and asparagine 834. The 143-residue stretch at 930–1072 (INIPTHGSVI…QTKRHEVVHA (143 aa)) folds into the MGS-like domain. Residues 930 to 1072 (INIPTHGSVI…QTKRHEVVHA (143 aa)) form an allosteric domain region.

The protein belongs to the CarB family. Composed of two chains; the small (or glutamine) chain promotes the hydrolysis of glutamine to ammonia, which is used by the large (or ammonia) chain to synthesize carbamoyl phosphate. Tetramer of heterodimers (alpha,beta)4. Requires Mg(2+) as cofactor. Mn(2+) serves as cofactor.

The catalysed reaction is hydrogencarbonate + L-glutamine + 2 ATP + H2O = carbamoyl phosphate + L-glutamate + 2 ADP + phosphate + 2 H(+). The enzyme catalyses hydrogencarbonate + NH4(+) + 2 ATP = carbamoyl phosphate + 2 ADP + phosphate + 2 H(+). It functions in the pathway amino-acid biosynthesis; L-arginine biosynthesis; carbamoyl phosphate from bicarbonate: step 1/1. Its pathway is pyrimidine metabolism; UMP biosynthesis via de novo pathway; (S)-dihydroorotate from bicarbonate: step 1/3. Functionally, large subunit of the glutamine-dependent carbamoyl phosphate synthetase (CPSase). CPSase catalyzes the formation of carbamoyl phosphate from the ammonia moiety of glutamine, carbonate, and phosphate donated by ATP, constituting the first step of 2 biosynthetic pathways, one leading to arginine and/or urea and the other to pyrimidine nucleotides. The large subunit (synthetase) binds the substrates ammonia (free or transferred from glutamine from the small subunit), hydrogencarbonate and ATP and carries out an ATP-coupled ligase reaction, activating hydrogencarbonate by forming carboxy phosphate which reacts with ammonia to form carbamoyl phosphate. In Bacillus cereus (strain ATCC 10987 / NRS 248), this protein is Carbamoyl phosphate synthase large chain.